Consider the following 787-residue polypeptide: Integrin beta-3 (787 aa).

Positions 1-25 (MRTRRPGQLWATLLALGALAGVVVG) are cleaved as a signal peptide. Over 27 to 717 (SNICTTRGVN…EEPECPKGPD (691 aa)) the chain is Extracellular. Residues 29–75 (ICTTRGVNSCQQCLAVSPVCAWCSDESLPQNSPRCNLKKNLLKDKCS) enclose the PSI domain. Intrachain disulfides connect C30-C48, C38-C460, C41-C63, C51-C74, C202-C209, C257-C298, C399-C411, C431-C458, C462-C482, C473-C485, C487-C496, C498-C528, C511-C526, C520-C531, C533-C546, C548-C569, C553-C567, C561-C572, and C574-C583. Residues 134–376 (DYPVDIYYLM…QLIVDAYGKI (243 aa)) form the VWFA domain. The Mg(2+) site is built by S146 and S148. Residues S148, D151, D152, and D183 each contribute to the Ca(2+) site. Positions 202 to 209 (CYTMKSTC) are CX3CL1-binding. Positions 202-209 (CYTMKSTC) are involved in CX3CL1-, NRG1-, FGF1- and IGF1-binding. N240, D242, P244, E245, and D276 together coordinate Ca(2+). E245 contributes to the Mg(2+) binding site. Residues 292 to 312 (LPNDGRCHIGPDNHYSASTTM) are CX3CL1-binding. N-linked (GlcNAc...) asparagine glycans are attached at residues N345 and N396. 4 consecutive I-EGF domains span residues 462 to 497 (CQAFAQPLSPRCNNGNGTFECGVCRCDQGWLGSMCE), 498 to 547 (CSEE…KYCE), 548 to 584 (CDDFSCVRYKGEMCSGHGQCNCGDCVCDSDWTGYYCN), and 585 to 624 (CTTRTDTCMSTNGLLCSGRGNCECGSCVCVQPGSYGDTCE). Residue N477 is glycosylated (N-linked (GlcNAc...) asparagine). N584 is a glycosylation site (N-linked (GlcNAc...) asparagine). 9 disulfide bridges follow: C585–C608, C592–C606, C600–C611, C613–C623, C626–C629, C633–C680, C639–C660, C642–C656, and C688–C712. N679 carries N-linked (GlcNAc...) asparagine glycosylation. Residues 718–738 (ILVVLLSVMGAILLIGLATLL) form a helical membrane-spanning segment. At 739–787 (IWKLLITIHDRKEFAKFEEERARAKWDTANNPLYKEATSTFTNITYRGT) the chain is on the cytoplasmic side. Phosphothreonine is present on T766. Position 772 is a phosphotyrosine (Y772). Residues 776–782 (TSTFTNI) carry the LIR motif. The residue at position 778 (T778) is a Phosphothreonine. Position 784 is a phosphotyrosine (Y784).

Belongs to the integrin beta chain family. As to quaternary structure, heterodimer of an alpha and a beta subunit. Beta-3 (ITGB3) associates with either alpha-IIB (ITGA2B) or alpha-V (ITGAV). Interacts with FLNB and COMP. Interacts with PDIA6 following platelet stimulation. Interacts with SYK; upon activation by ITGB3 promotes platelet adhesion. Interacts with MYO10. Interacts with DAB2. Interacts with FERMT2. Integrin ITGAV:ITGB3 interacts with FBLN5 (via N-terminus). Interacts with EMP2; regulates the levels of the heterodimer ITGA5:ITGB3 integrin expression on the plasma membrane. ITGAV:ITGB3 interacts with CCN3. ITGAV:ITGB3 and ITGA2B:ITGB3 interact with SELP (via C-type lectin domain); the interaction mediates cell-cell interaction and adhesion. ITGAV:ITGB3 interacts with AGRA2. ITGAV:ITGB3 is found in a ternary complex with CX3CR1 and CX3CL1. ITGAV:ITGB3 is found in a ternary complex with NRG1 and ERBB3. ITGAV:ITGB3 is found in a ternary complex with FGF1 and FGFR1. ITGAV:ITGB3 interacts with FGF2; it is likely that FGF2 can simultaneously bind ITGAV:ITGB3 and FGF receptors. ITGAV:ITGB3 binds to IL1B. ITGAV:ITGB3 is found in a ternary complex with IGF1 and IGF1R. ITGAV:ITGB3 interacts with IGF2. ITGAV:ITGB3 interacts with FBN1. ITGAV:ITGB3 interacts with CD9, CD81 and CD151 (via second extracellular domain). Interacts (via the allosteric site (site 2)) with CXCL12 in a CXCR4-independent manner. Interacts with MXRA8/DICAM; the interaction inhibits ITGAV:ITGB3 heterodimer formation. ITGAV:ITGB3 interacts with PTN. Forms a complex with PTPRZ1 and PTN that stimulates endothelial cell migration through ITGB3 Tyr-772 phosphorylation. ITGAV:ITGB3 interacts with SLC6A4. Interacts with SLC6A4 (via C-terminus); this interaction regulates SLC6A4 trafficking. ITGA2B:ITGB3 interacts with PPIA/CYPA; the interaction is ROS and PPIase activity-dependent and is increased in the presence of thrombin. Interacts with tensin TNS3; TNS3 also interacts with PEAK1, thus acting as an adapter molecule to bridge the association of PEAK1 with ITGB3. Interacts with TM4SF19. Phosphorylated on tyrosine residues in response to thrombin-induced platelet aggregation. Probably involved in outside-in signaling.

It localises to the cell membrane. The protein resides in the cell projection. The protein localises to the lamellipodium membrane. Its subcellular location is the cell junction. It is found in the focal adhesion. It localises to the postsynaptic cell membrane. The protein resides in the synapse. Functionally, integrin alpha-V/beta-3 (ITGAV:ITGB3) is a receptor for cytotactin, fibronectin, laminin, matrix metalloproteinase-2, osteopontin, osteomodulin, prothrombin, thrombospondin, vitronectin and von Willebrand factor. Integrin alpha-IIB/beta-3 (ITGA2B:ITGB3) is a receptor for fibronectin, fibrinogen, plasminogen, prothrombin, thrombospondin and vitronectin. Integrins alpha-IIB/beta-3 and alpha-V/beta-3 recognize the sequence R-G-D in a wide array of ligands. Integrin alpha-IIB/beta-3 recognizes the sequence H-H-L-G-G-G-A-K-Q-A-G-D-V in fibrinogen gamma chain. Following activation integrin alpha-IIB/beta-3 brings about platelet/platelet interaction through binding of soluble fibrinogen. This step leads to rapid platelet aggregation which physically plugs ruptured endothelial surfaces. Fibrinogen binding enhances SELP expression in activated platelets. ITGAV:ITGB3 binds to fractalkine (CX3CL1) and acts as its coreceptor in CX3CR1-dependent fractalkine signaling. ITGAV:ITGB3 binds to NRG1 (via EGF domain) and this binding is essential for NRG1-ERBB signaling. ITGAV:ITGB3 binds to FGF1 and this binding is essential for FGF1 signaling. ITGAV:ITGB3 binds to FGF2 and this binding is essential for FGF2 signaling. ITGAV:ITGB3 binds to IGF1 and this binding is essential for IGF1 signaling. ITGAV:ITGB3 binds to IGF2 and this binding is essential for IGF2 signaling. ITGAV:ITGB3 binds to IL1B and this binding is essential for IL1B signaling. ITGAV:ITGB3 binds to PLA2G2A via a site (site 2) which is distinct from the classical ligand-binding site (site 1) and this induces integrin conformational changes and enhanced ligand binding to site 1. ITGAV:ITGB3 acts as a receptor for fibrillin-1 (FBN1) and mediates R-G-D-dependent cell adhesion to FBN1. In brain, plays a role in synaptic transmission and plasticity. Involved in the regulation of the serotonin neurotransmission, is required to localize to specific compartments within the synapse the serotonin receptor SLC6A4 and for an appropriate reuptake of serotonin. Controls excitatory synaptic strength by regulating GRIA2-containing AMPAR endocytosis, which affects AMPAR abundance and composition. ITGAV:ITGB3 acts as a receptor for CD40LG. ITGAV:ITGB3 acts as a receptor for IBSP and promotes cell adhesion and migration to IBSP. This Rattus norvegicus (Rat) protein is Integrin beta-3.